A 177-amino-acid chain; its full sequence is Large ribosomal subunit protein uL6 (177 aa).

Belongs to the universal ribosomal protein uL6 family. As to quaternary structure, part of the 50S ribosomal subunit.

Functionally, this protein binds to the 23S rRNA, and is important in its secondary structure. It is located near the subunit interface in the base of the L7/L12 stalk, and near the tRNA binding site of the peptidyltransferase center. The protein is Large ribosomal subunit protein uL6 of Aliivibrio salmonicida (strain LFI1238) (Vibrio salmonicida (strain LFI1238)).